The chain runs to 197 residues: Holliday junction branch migration complex subunit RuvA (197 aa).

The tract at residues 1-65 (MISQVRGTIM…EDAWHLYGFA (65 aa)) is domain I. The tract at residues 66–140 (HAYERAVFQK…DKIDAVGPAP (75 aa)) is domain II. The tract at residues 140-144 (PATGT) is flexible linker. The domain III stretch occupies residues 145-197 (APSPLGDDAVRALIALGYNQTEADRAVRAVVESGAPKDVSSLVRGALSRLTAK).

The protein belongs to the RuvA family. As to quaternary structure, homotetramer. Forms an RuvA(8)-RuvB(12)-Holliday junction (HJ) complex. HJ DNA is sandwiched between 2 RuvA tetramers; dsDNA enters through RuvA and exits via RuvB. An RuvB hexamer assembles on each DNA strand where it exits the tetramer. Each RuvB hexamer is contacted by two RuvA subunits (via domain III) on 2 adjacent RuvB subunits; this complex drives branch migration. In the full resolvosome a probable DNA-RuvA(4)-RuvB(12)-RuvC(2) complex forms which resolves the HJ.

The protein localises to the cytoplasm. In terms of biological role, the RuvA-RuvB-RuvC complex processes Holliday junction (HJ) DNA during genetic recombination and DNA repair, while the RuvA-RuvB complex plays an important role in the rescue of blocked DNA replication forks via replication fork reversal (RFR). RuvA specifically binds to HJ cruciform DNA, conferring on it an open structure. The RuvB hexamer acts as an ATP-dependent pump, pulling dsDNA into and through the RuvAB complex. HJ branch migration allows RuvC to scan DNA until it finds its consensus sequence, where it cleaves and resolves the cruciform DNA. The polypeptide is Holliday junction branch migration complex subunit RuvA (Gemmatimonas aurantiaca (strain DSM 14586 / JCM 11422 / NBRC 100505 / T-27)).